We begin with the raw amino-acid sequence, 185 residues long: MEPTITIENIVASTRLAEDFDLQKLLDTGLKGAVYNKNKFPGLVYRIENPKAAFLIFASGKVVCTGTKNVENSRIALFNLANELNSIGYKGIYLKPEIHVQNVVASANLRTSLNLNAVLSAFGVENVEYEPEVFPGLVYKLADPRVVVLVFRTGKLVITGGKCPEDCEEGLRIIKTQLDNLGLLY.

2 repeat units span residues 7 to 84 (IENI…ANEL) and 100 to 178 (VQNV…KTQL).

This sequence belongs to the TBP family.

General factor that plays a role in the activation of archaeal genes transcribed by RNA polymerase. Binds specifically to the TATA box promoter element which lies close to the position of transcription initiation. This chain is TATA-box-binding protein 2, found in Methanosarcina acetivorans (strain ATCC 35395 / DSM 2834 / JCM 12185 / C2A).